A 268-amino-acid polypeptide reads, in one-letter code: Phosphatidylglycerol--prolipoprotein diacylglyceryl transferase (268 aa).

Helical transmembrane passes span 23-43 (IGLRWYGLMYLLGFVFARWLA), 62-82 (LLFNGFMGVFIGGRVGDVFFY), 97-117 (VWEGGMSFHGGLIGVIVAMIW), 132-152 (FVAPLIPFGLGLGRIGNFINL), 179-199 (SQLYEAFLEGLVLFAILNIFI), 206-226 (ASVAGLFLIGYGVFRFIVEYV), and 241-261 (GQALCLPMIIGGAFIMAWAYS). An a 1,2-diacyl-sn-glycero-3-phospho-(1'-sn-glycerol)-binding site is contributed by arginine 145.

The protein belongs to the Lgt family.

It localises to the cell inner membrane. The catalysed reaction is L-cysteinyl-[prolipoprotein] + a 1,2-diacyl-sn-glycero-3-phospho-(1'-sn-glycerol) = an S-1,2-diacyl-sn-glyceryl-L-cysteinyl-[prolipoprotein] + sn-glycerol 1-phosphate + H(+). Its pathway is protein modification; lipoprotein biosynthesis (diacylglyceryl transfer). Catalyzes the transfer of the diacylglyceryl group from phosphatidylglycerol to the sulfhydryl group of the N-terminal cysteine of a prolipoprotein, the first step in the formation of mature lipoproteins. The protein is Phosphatidylglycerol--prolipoprotein diacylglyceryl transferase of Haemophilus influenzae (strain PittEE).